The chain runs to 405 residues: Phosphatidylinositol 5-phosphate 4-kinase type-2 alpha (405 aa).

The region spanning 32–404 is the PIPK domain; sequence ASDPLLSVLM…RFLDFIANIL (373 aa). The segment at 287–326 is disordered; the sequence is QEEVECEENDGEDEGESDGTHPIGTPPDSPGNTLNSSLPL. A compositionally biased stretch (acidic residues) spans 288-303; sequence EEVECEENDGEDEGES.

As to quaternary structure, homodimer. Post-translationally, phosphorylated in tyrosines. Phosphorylation is induced by light and increases kinase activity.

It is found in the cell membrane. The protein resides in the nucleus. The protein localises to the lysosome. It localises to the cytoplasm. It catalyses the reaction a 1,2-diacyl-sn-glycero-3-phospho-(1D-myo-inositol-5-phosphate) + ATP = a 1,2-diacyl-sn-glycero-3-phospho-(1D-myo-inositol-4,5-bisphosphate) + ADP + H(+). The catalysed reaction is 1,2-dihexadecanoyl-sn-glycero-3-phospho-(1D-myo-inositol-5-phosphate) + ATP = 1,2-dihexadecanoyl-sn-glycero-3-phospho-(1D-myo-inositol-4,5-bisphosphate) + ADP + H(+). It carries out the reaction 1,2-dihexadecanoyl-sn-glycero-3-phospho-(1D-myo-inositol-5-phosphate) + GTP = 1,2-dihexadecanoyl-sn-glycero-3-phospho-(1D-myo-inositol-4,5-bisphosphate) + GDP + H(+). Its activity is regulated as follows. In rod outer segments, activated by light. Catalyzes the phosphorylation of phosphatidylinositol 5-phosphate (PtdIns5P) on the fourth hydroxyl of the myo-inositol ring, to form phosphatidylinositol 4,5-bisphosphate (PtdIns(4,5)P2). Has both ATP- and GTP-dependent kinase activities. This is Phosphatidylinositol 5-phosphate 4-kinase type-2 alpha (PIP4K2A) from Gallus gallus (Chicken).